Here is a 470-residue protein sequence, read N- to C-terminus: Bifunctional protein ArgHA (470 aa).

An argininosuccinate lyase region spans residues 1 to 470 (MALWGGRFSQ…TSGISIRAAR (470 aa)).

The protein in the N-terminal section; belongs to the lyase 1 family. Argininosuccinate lyase subfamily. In the C-terminal section; belongs to the acetyltransferase family. ArgA subfamily.

The protein resides in the cytoplasm. The catalysed reaction is 2-(N(omega)-L-arginino)succinate = fumarate + L-arginine. It carries out the reaction L-glutamate + acetyl-CoA = N-acetyl-L-glutamate + CoA + H(+). Its pathway is amino-acid biosynthesis; L-arginine biosynthesis; N(2)-acetyl-L-ornithine from L-glutamate: step 1/4. It participates in amino-acid biosynthesis; L-arginine biosynthesis; L-arginine from L-ornithine and carbamoyl phosphate: step 3/3. This Moritella profunda protein is Bifunctional protein ArgHA (argHA).